The sequence spans 99 residues: Small integral membrane protein 9 (99 aa).

Positions 1–26 (MEPQKLLIIGFLLCSLTCLLLETVAS) are cleaved as a signal peptide. Residues 27 to 73 (SPLPLSALGIQEKTGSKPRSGGNHRSWLNNFRDYLWQLIKSALPPAA) lie on the Extracellular side of the membrane. Residues 74-94 (IVAFLLTSALMGILCCFTILV) traverse the membrane as a helical segment. Residues 95-99 (VDPVH) lie on the Cytoplasmic side of the membrane.

The protein resides in the cell membrane. The sequence is that of Small integral membrane protein 9 (SMIM9) from Homo sapiens (Human).